The following is an 84-amino-acid chain: Cell division topological specificity factor (84 aa).

Belongs to the MinE family.

Prevents the cell division inhibition by proteins MinC and MinD at internal division sites while permitting inhibition at polar sites. This ensures cell division at the proper site by restricting the formation of a division septum at the midpoint of the long axis of the cell. The chain is Cell division topological specificity factor from Pseudomonas putida (strain W619).